We begin with the raw amino-acid sequence, 197 residues long: 3-isopropylmalate dehydratase small subunit (197 aa).

The protein belongs to the LeuD family. LeuD type 1 subfamily. In terms of assembly, heterodimer of LeuC and LeuD.

It catalyses the reaction (2R,3S)-3-isopropylmalate = (2S)-2-isopropylmalate. It functions in the pathway amino-acid biosynthesis; L-leucine biosynthesis; L-leucine from 3-methyl-2-oxobutanoate: step 2/4. In terms of biological role, catalyzes the isomerization between 2-isopropylmalate and 3-isopropylmalate, via the formation of 2-isopropylmaleate. This is 3-isopropylmalate dehydratase small subunit from Streptomyces avermitilis (strain ATCC 31267 / DSM 46492 / JCM 5070 / NBRC 14893 / NCIMB 12804 / NRRL 8165 / MA-4680).